The chain runs to 890 residues: Agglutinin-like protein ARB_02240 (890 aa).

The first 20 residues, 1–20 (MRLTTSVLLWAATSVLQADA), serve as a signal peptide directing secretion. 4 N-linked (GlcNAc...) asparagine glycosylation sites follow: N106, N217, N583, and N654. Positions 680 to 872 (IPSGPTTRPE…GGAGSLSPST (193 aa)) are disordered. 2 stretches are compositionally biased toward low complexity: residues 693-753 (TSST…TDSS) and 760-790 (TTSTAESTETTEPTSTDASTESTSTATHSST). Over residues 791 to 802 (GSDPESTNTRHP) the composition is skewed to polar residues. Composition is skewed to low complexity over residues 803–812 (SSTASGSTTT) and 821–837 (SSSSEGPVPTSMGTATT). A compositionally biased stretch (gly residues) spans 838–848 (TGGGSIPGSGT). G864 carries GPI-anchor amidated glycine lipidation. A propeptide spans 865-890 (AGSLSPSTWGKVVTCISSMALLVAFI) (removed in mature form).

It belongs to the ALS family. Post-translationally, the GPI-anchor is attached to the protein in the endoplasmic reticulum and serves to target the protein to the cell surface. There, the glucosamine-inositol phospholipid moiety is cleaved off and the GPI-modified mannoprotein is covalently attached via its lipidless GPI glycan remnant to the 1,6-beta-glucan of the outer cell wall layer.

Its subcellular location is the secreted. The protein resides in the cell membrane. It is found in the cell wall. Functionally, cell surface adhesion protein which mediates cell agglutination and host tissue adherence. The protein is Agglutinin-like protein ARB_02240 of Arthroderma benhamiae (strain ATCC MYA-4681 / CBS 112371) (Trichophyton mentagrophytes).